We begin with the raw amino-acid sequence, 464 residues long: Soluble pyridine nucleotide transhydrogenase (464 aa).

FAD is bound at residue D35–C44.

This sequence belongs to the class-I pyridine nucleotide-disulfide oxidoreductase family. FAD serves as cofactor.

The protein resides in the cytoplasm. It catalyses the reaction NAD(+) + NADPH = NADH + NADP(+). Its function is as follows. Conversion of NADPH, generated by peripheral catabolic pathways, to NADH, which can enter the respiratory chain for energy generation. The sequence is that of Soluble pyridine nucleotide transhydrogenase from Pseudomonas putida (strain GB-1).